Here is a 296-residue protein sequence, read N- to C-terminus: NAD kinase (296 aa).

The active-site Proton acceptor is the Asp-73. Residues 73–74 (DG), Lys-78, 151–152 (NE), Arg-178, Asp-180, and 191–196 (TAHAMS) contribute to the NAD(+) site.

This sequence belongs to the NAD kinase family. Requires a divalent metal cation as cofactor.

The protein localises to the cytoplasm. It catalyses the reaction NAD(+) + ATP = ADP + NADP(+) + H(+). Its function is as follows. Involved in the regulation of the intracellular balance of NAD and NADP, and is a key enzyme in the biosynthesis of NADP. Catalyzes specifically the phosphorylation on 2'-hydroxyl of the adenosine moiety of NAD to yield NADP. The protein is NAD kinase of Francisella tularensis subsp. holarctica (strain FTNF002-00 / FTA).